A 218-amino-acid chain; its full sequence is Octanoyltransferase (218 aa).

Positions 31-206 (EETPDEVWLV…ELVNLLGYEQ (176 aa)) constitute a BPL/LPL catalytic domain. Residues 70-77 (RGGQVTYH), 137-139 (SLG), and 150-152 (GLA) each bind substrate. The active-site Acyl-thioester intermediate is the Cys168.

The protein belongs to the LipB family.

The protein resides in the cytoplasm. The catalysed reaction is octanoyl-[ACP] + L-lysyl-[protein] = N(6)-octanoyl-L-lysyl-[protein] + holo-[ACP] + H(+). It functions in the pathway protein modification; protein lipoylation via endogenous pathway; protein N(6)-(lipoyl)lysine from octanoyl-[acyl-carrier-protein]: step 1/2. Its function is as follows. Catalyzes the transfer of endogenously produced octanoic acid from octanoyl-acyl-carrier-protein onto the lipoyl domains of lipoate-dependent enzymes. Lipoyl-ACP can also act as a substrate although octanoyl-ACP is likely to be the physiological substrate. This Vibrio vulnificus (strain CMCP6) protein is Octanoyltransferase.